The chain runs to 188 residues: Ribosome-recycling factor (188 aa).

It belongs to the RRF family.

It localises to the cytoplasm. In terms of biological role, responsible for the release of ribosomes from messenger RNA at the termination of protein biosynthesis. May increase the efficiency of translation by recycling ribosomes from one round of translation to another. The polypeptide is Ribosome-recycling factor (Blochmanniella floridana).